Consider the following 440-residue polypeptide: 26S proteasome regulatory subunit 4 (440 aa).

Over residues 1–13 (MGQSQSGGHGPGG) the composition is skewed to gly residues. The interval 1-49 (MGQSQSGGHGPGGGKKDDKDKKKKYEPPVPTRVGKKKKKTKGPDAASKL) is disordered. Residue Gly2 is the site of N-myristoyl glycine attachment. Position 4 is a phosphoserine (Ser4). The span at 14–26 (GKKDDKDKKKKYE) shows a compositional bias: basic and acidic residues. A Phosphothreonine modification is found at Thr53. The tract at residues 84 to 104 (QMKPLEEKQEEERSKVDDLRG) is disordered. The segment covering 86–103 (KPLEEKQEEERSKVDDLR) has biased composition (basic and acidic residues). ATP is bound at residue 226-233 (GPPGTGKT). Residue Lys237 forms a Glycyl lysine isopeptide (Lys-Gly) (interchain with G-Cter in ubiquitin) linkage. Lys258 is subject to N6-acetyllysine. Thr434 is modified (phosphothreonine). Tyr439 bears the Phosphotyrosine mark.

This sequence belongs to the AAA ATPase family. Component of the 19S proteasome regulatory particle complex. The 26S proteasome consists of a 20S core particle (CP) and two 19S regulatory subunits (RP). The regulatory particle is made of a lid composed of 9 subunits, a base containing 6 ATPases including PSMC1 and few additional components. Interacts with SCA7. Interacts with NGLY1. Interacts with PAAF1.

It is found in the cytoplasm. The protein resides in the nucleus. The protein localises to the membrane. Functionally, component of the 26S proteasome, a multiprotein complex involved in the ATP-dependent degradation of ubiquitinated proteins. This complex plays a key role in the maintenance of protein homeostasis by removing misfolded or damaged proteins, which could impair cellular functions, and by removing proteins whose functions are no longer required. Therefore, the proteasome participates in numerous cellular processes, including cell cycle progression, apoptosis, or DNA damage repair. PSMC1 belongs to the heterohexameric ring of AAA (ATPases associated with diverse cellular activities) proteins that unfolds ubiquitinated target proteins that are concurrently translocated into a proteolytic chamber and degraded into peptides. This is 26S proteasome regulatory subunit 4 (PSMC1) from Homo sapiens (Human).